The primary structure comprises 442 residues: tRNA modification GTPase MnmE (442 aa).

The (6S)-5-formyl-5,6,7,8-tetrahydrofolate site is built by Arg21, Glu79, and Lys118. Positions 214–367 (GFKIAIVGKP…LKEELQNYLN (154 aa)) constitute a TrmE-type G domain. Asn224 contacts K(+). GTP is bound by residues 224-229 (NVGKSS), 243-249 (SDIAGTT), and 268-271 (DTAG). Ser228 is a Mg(2+) binding site. The K(+) site is built by Ser243, Ile245, and Thr248. Thr249 lines the Mg(2+) pocket. Lys442 contacts (6S)-5-formyl-5,6,7,8-tetrahydrofolate.

This sequence belongs to the TRAFAC class TrmE-Era-EngA-EngB-Septin-like GTPase superfamily. TrmE GTPase family. Homodimer. Heterotetramer of two MnmE and two MnmG subunits. K(+) is required as a cofactor.

The protein localises to the cytoplasm. Exhibits a very high intrinsic GTPase hydrolysis rate. Involved in the addition of a carboxymethylaminomethyl (cmnm) group at the wobble position (U34) of certain tRNAs, forming tRNA-cmnm(5)s(2)U34. This Campylobacter jejuni (strain RM1221) protein is tRNA modification GTPase MnmE.